An 881-amino-acid chain; its full sequence is MTDMYASLRSNVSMLGQILGDTMRTHLGDSFLEKVEQIRKLAKDSRRGDEAAREQMLELLTALPDEELVPFAKAFNQFLNLANLSEQFHTISRNCDELVCVPDPVEQLLGRMLNGRVDQTKMLDCLKTLDIDLVLTAHPTEISRRTLIQKYAAIVDCLAEQENNQLSDRERQQINLRLRQLIAQIWHTNEIRRERPTPVDEARWGLSTIEESLWHAVPDFLRQLNDQVQERTGQQLPIDIAPVRFSSWMGGDRDGNPFVTAKVTQEVLDRNRHAAARLFLKDIVLLVGELSMEEANDELKAYTNNSCEPYRFVLRSLRQKLRDTIDYLNARIEGHNPEVDKSTLIWQESDLKAPLEMLYKSLYDCGMRLIANGLLLDILRRLACFGIHMLRLDIRQDAGRHCDVLAELTRYLGMGDFNHWDETEKQAFLLRELSNRRPLIPSNWQPSADVAEVLNTCRLIAKHPAKALGSYVISMASKPSDVLTVLLLLKETGCTHPMRVVPLFETLSDLNNAAACITDLLDIDWYRGYTKGMQEVMIGYSDSAKDAGVMAAAWAQYRAQEQLVAVCNQAGVKLTLFHGRGGSIGRGGGPAHKAILSQPPGSVDGRIRVTEQGEMIRFKFGLPKLAVQSLALYTSAVLEATLLPPPEPKQEWRNCMERIAEESVSAYRGIVREEPDFVAYFRAATPEVELGKLPLGSRPAKRRVDGGIESLRAIPWIFAWSQNRLMLPAWLGAGEALQAACQRGEIGLLQDMEREWPFFSTRISMLEMVYAKAEPNLARYYETCLVSTNLHHLGETLRQRLDLGIKVVLELTKSDTLMAHTPWNRESVKLRNPYIDPLNFLQTELLARTRKETSETPASEHVQLALMLTIAGVAAGMRNTG.

Catalysis depends on residues histidine 138 and lysine 545.

It belongs to the PEPCase type 1 family. The cofactor is Mg(2+).

It carries out the reaction oxaloacetate + phosphate = phosphoenolpyruvate + hydrogencarbonate. Forms oxaloacetate, a four-carbon dicarboxylic acid source for the tricarboxylic acid cycle. The chain is Phosphoenolpyruvate carboxylase from Shewanella oneidensis (strain ATCC 700550 / JCM 31522 / CIP 106686 / LMG 19005 / NCIMB 14063 / MR-1).